A 278-amino-acid polypeptide reads, in one-letter code: HTH-type transcriptional regulator HdfR (278 aa).

The 58-residue stretch at 1–58 (MDTELLKTFLEVSRTRHFGRAAEALYLTQSAVSFRIRQLENQLGVNLFTRHRNNIRLT) folds into the HTH lysR-type domain. Residues 18–37 (FGRAAEALYLTQSAVSFRIR) constitute a DNA-binding region (H-T-H motif).

The protein belongs to the LysR transcriptional regulatory family.

In terms of biological role, negatively regulates the transcription of the flagellar master operon flhDC by binding to the upstream region of the operon. The protein is HTH-type transcriptional regulator HdfR of Salmonella agona (strain SL483).